The primary structure comprises 193 residues: Probable nicotinate-nucleotide adenylyltransferase (193 aa).

The protein belongs to the NadD family.

It carries out the reaction nicotinate beta-D-ribonucleotide + ATP + H(+) = deamido-NAD(+) + diphosphate. It participates in cofactor biosynthesis; NAD(+) biosynthesis; deamido-NAD(+) from nicotinate D-ribonucleotide: step 1/1. Functionally, catalyzes the reversible adenylation of nicotinate mononucleotide (NaMN) to nicotinic acid adenine dinucleotide (NaAD). This Endomicrobium trichonymphae protein is Probable nicotinate-nucleotide adenylyltransferase.